Here is a 207-residue protein sequence, read N- to C-terminus: Thymidylate kinase (207 aa).

7 to 14 lines the ATP pocket; it reads GCEGSGKS.

Belongs to the thymidylate kinase family.

It catalyses the reaction dTMP + ATP = dTDP + ADP. Phosphorylation of dTMP to form dTDP in both de novo and salvage pathways of dTTP synthesis. This Chlamydia caviae (strain ATCC VR-813 / DSM 19441 / 03DC25 / GPIC) (Chlamydophila caviae) protein is Thymidylate kinase.